The primary structure comprises 634 residues: MENKWFLLMVRDDFKGGKITLEKALKLLEKLDIQCNTIHVKYIFKDNDRLKQGRITIEEFRTIYRIITYREEIIEIFNTYSENRKILLEKNLVEFLMREQYTLDFNKSIASEIIQKYEPIEEVKQAHQMSFEGFRRYMDSSECLLFDNKCDHVYQDMTHPLTDYFISSSHNTYLISDQLWGPSDLWGYISALVKGCRCLEIDCWDGSQNEPVVYHGYTFTSKLLFKTVIQAINKYAFLASEYPVVLSLENHCSPSQQEVMADSLLATFGDALLSYTLDNFSDRLPSPEALKFKILVRNKKIGTLHETLERKGSDMHGKVEEFEEEEEIEQEEDGSGAKEPEPVGDFQDDLAKEEQLKRVVGIPLFRKKKIKISMALSDLVIYTKVEKFKSFHHSHLYQQFNESNSIGESQARKLTKLAAREFILHTRRFITRVYPKALRADSSNFNPQEFWNVGCQMVALNFQTPGVPMDLQNGKFLDNGCSGYVLKPRFLRDKKTKFNPHKVQIDSNPLTLTIRLISGIQLPPSYQNKADTLVIVEIFGVPNDQMKQQSRVIKKNAFNPRWNETFTFVIQVPELALIRFVAENQGLIAGNEFLGQYTLPVLCMNRGYRRVPLFSKMGESLEPASLFIYVWYIR.

One can recognise an EF-hand domain in the interval 35-70 (CNTIHVKYIFKDNDRLKQGRITIEEFRTIYRIITYR). Residues 155–299 (QDMTHPLTDY…LKFKILVRNK (145 aa)) enclose the PI-PLC X-box domain. Active-site residues include H170 and H215. The tract at residues 312–345 (GSDMHGKVEEFEEEEEIEQEEDGSGAKEPEPVGD) is disordered. The segment covering 321 to 334 (EFEEEEEIEQEEDG) has biased composition (acidic residues). In terms of domain architecture, PI-PLC Y-box spans 376–492 (LSDLVIYTKV…GYVLKPRFLR (117 aa)). The region spanning 492–615 (RDKKTKFNPH…RGYRRVPLFS (124 aa)) is the C2 domain.

In terms of assembly, interacts (via its C2 domain) with PtdIns(3)P and, to a lesser extent, PtdIns(5)P in vitro. It depends on Ca(2+) as a cofactor.

It is found in the nucleus. The protein localises to the cytoplasm. The protein resides in the perinuclear region. It catalyses the reaction a 1,2-diacyl-sn-glycero-3-phospho-(1D-myo-inositol-4,5-bisphosphate) + H2O = 1D-myo-inositol 1,4,5-trisphosphate + a 1,2-diacyl-sn-glycerol + H(+). Its function is as follows. The production of the second messenger molecules diacylglycerol (DAG) and inositol 1,4,5-trisphosphate (IP3) is mediated by activated phosphatidylinositol-specific phospholipase C enzymes. In vitro, hydrolyzes PtdIns(4,5)P2 in a Ca(2+)-dependent manner. Triggers intracellular Ca(2+) oscillations in oocytes solely during M phase and is involved in inducing oocyte activation and initiating embryonic development up to the blastocyst stage. Is therefore a strong candidate for the egg-activating soluble sperm factor that is transferred from the sperm into the egg cytoplasm following gamete membrane fusion. May exert an inhibitory effect on phospholipase-C-coupled processes that depend on calcium ions and protein kinase C, including CFTR trafficking and function. The sequence is that of 1-phosphatidylinositol 4,5-bisphosphate phosphodiesterase zeta-1 from Bos taurus (Bovine).